The following is a 385-amino-acid chain: Leucine aminopeptidase 1 (385 aa).

The signal sequence occupies residues 1 to 19 (MKFPSFLSLGIAASTTALA). A propeptide spanning residues 20-87 (ALPDQKPIGD…FPRAFAKTAV (68 aa)) is cleaved from the precursor. A glycan (N-linked (GlcNAc...) asparagine) is linked at Asn-177. Zn(2+)-binding residues include His-185 and Asp-204. N-linked (GlcNAc...) asparagine glycosylation occurs at Asn-229. Residues Glu-243 and Asp-270 each contribute to the Zn(2+) site. Residues Cys-319 and Cys-323 are joined by a disulfide bond. His-352 provides a ligand contact to Zn(2+).

It belongs to the peptidase M28 family. M28E subfamily. As to quaternary structure, monomer. Requires Zn(2+) as cofactor.

It localises to the secreted. In terms of biological role, extracellular aminopeptidase that allows assimilation of proteinaceous substrates. This Blastomyces gilchristii (strain SLH14081) (Blastomyces dermatitidis) protein is Leucine aminopeptidase 1 (LAP1).